Consider the following 386-residue polypeptide: MAP kinase-activated protein kinase 2 (386 aa).

Positions 1–29 are disordered; that stretch reads MLSGSPGQTPPAPFPSPPPPAPAQPPPPF. Residues 8–29 show a composition bias toward pro residues; that stretch reads QTPPAPFPSPPPPAPAQPPPPF. A Protein kinase domain is found at 50–311; that stretch reads KVTSQVLGLG…ITEFMNHPWI (262 aa). ATP-binding positions include 56-64 and K79; that span reads LGLGINGKV. 125–127 provides a ligand contact to staurosporine; sequence ECL. D172 functions as the Proton acceptor in the catalytic mechanism. T208 carries the post-translational modification Phosphothreonine; by MAPK14. S258 carries the phosphoserine; by MAPK14 modification. The residue at position 314 (S314) is a Phosphoserine; by autocatalysis. Residues 314 to 350 are autoinhibitory helix; that stretch reads STKVPQTPLHTSRVLKEDKERWEDVKEEMTSALATMR. Position 320 is a phosphothreonine; by MAPK14 (T320). 2 short sequence motifs (nuclear export signal (NES)) span residues 331-354 and 342-351; these read DKER…VDYE and MTSALATMRV. Residue K339 forms a Glycyl lysine isopeptide (Lys-Gly) (interchain with G-Cter in SUMO) linkage. Positions 352-376 are p38 MAPK-binding site; sequence DYEQIKIKKIEDASNPLLLKRRKKA. 2 consecutive short sequence motifs (bipartite nuclear localization signal) follow at residues 357–360 and 371–375; these read KIKK and KRRKK.

The protein belongs to the protein kinase superfamily. CAMK Ser/Thr protein kinase family. Heterodimer with p38-alpha/MAPK14; this heterodimer forms a stable complex: molecules are positioned 'face to face' so that the ATP-binding sites of both kinases are at the heterodimer interface. Interacts with PHC2. Interacts with HSF1. In terms of processing, sumoylation inhibits the protein kinase activity. Phosphorylated and activated by MAP kinase p38-alpha/MAPK14 at Thr-208; Ser-258 and Thr-320. As to expression, ubiquitously expressed (at protein level).

Its subcellular location is the cytoplasm. The protein localises to the nucleus. The catalysed reaction is L-seryl-[protein] + ATP = O-phospho-L-seryl-[protein] + ADP + H(+). It catalyses the reaction L-threonyl-[protein] + ATP = O-phospho-L-threonyl-[protein] + ADP + H(+). With respect to regulation, activated following phosphorylation by p38-alpha/MAPK14 following various stresses. Inhibited following sumoylation. Specifically inhibited by pyrrolopyridine inhibitors. Stress-activated serine/threonine-protein kinase involved in cytokine production, endocytosis, reorganization of the cytoskeleton, cell migration, cell cycle control, chromatin remodeling, DNA damage response and transcriptional regulation. Following stress, it is phosphorylated and activated by MAP kinase p38-alpha/MAPK14, leading to phosphorylation of substrates. Phosphorylates serine in the peptide sequence, Hyd-X-R-X(2)-S, where Hyd is a large hydrophobic residue. Phosphorylates ALOX5, CDC25B, CDC25C, CEP131, ELAVL1, HNRNPA0, HSP27/HSPB1, KRT18, KRT20, LIMK1, LSP1, PABPC1, PARN, PDE4A, RCSD1, RPS6KA3, TAB3 and TTP/ZFP36. Phosphorylates HSF1; leading to the interaction with HSP90 proteins and inhibiting HSF1 homotrimerization, DNA-binding and transactivation activities. Mediates phosphorylation of HSP27/HSPB1 in response to stress, leading to dissociation of HSP27/HSPB1 from large small heat-shock protein (sHsps) oligomers and impairment of their chaperone activities and ability to protect against oxidative stress effectively. Involved in inflammatory response by regulating tumor necrosis factor (TNF) and IL6 production post-transcriptionally: acts by phosphorylating AU-rich elements (AREs)-binding proteins ELAVL1, HNRNPA0, PABPC1 and TTP/ZFP36, leading to regulation of the stability and translation of TNF and IL6 mRNAs. Phosphorylation of TTP/ZFP36, a major post-transcriptional regulator of TNF, promotes its binding to 14-3-3 proteins and reduces its ARE mRNA affinity leading to inhibition of dependent degradation of ARE-containing transcripts. Phosphorylates CEP131 in response to cellular stress following ultraviolet irradiation which promotes binding of CEP131 to 14-3-3 proteins and inhibits formation of novel centriolar satellites. Also involved in late G2/M checkpoint following DNA damage through a process of post-transcriptional mRNA stabilization: following DNA damage, relocalizes from nucleus to cytoplasm and phosphorylates HNRNPA0 and PARN, leading to stabilization of GADD45A mRNA. Involved in toll-like receptor signaling pathway (TLR) in dendritic cells: required for acute TLR-induced macropinocytosis by phosphorylating and activating RPS6KA3. In Mus musculus (Mouse), this protein is MAP kinase-activated protein kinase 2 (Mapkapk2).